We begin with the raw amino-acid sequence, 147 residues long: Deoxyuridine 5'-triphosphate nucleotidohydrolase (147 aa).

DUMP contacts are provided by S69, G82, D85, Y88, K93, R137, F142, and G143.

This sequence belongs to the dUTPase family. In terms of assembly, homotrimer. The cofactor is Mg(2+).

The catalysed reaction is dUTP + H2O = dUMP + diphosphate + H(+). The protein operates within pyrimidine metabolism; dUMP biosynthesis; dUMP from dCTP (dUTP route): step 2/2. Functionally, involved in nucleotide metabolism via production of dUMP, the immediate precursor of thymidine nucleotides, and decreases the intracellular concentration of dUTP so that uracil cannot be incorporated into DNA. Shows a significant activity against dITP, another potentially mutagenic nucleotide. This Saccharomyces cerevisiae (strain ATCC 204508 / S288c) (Baker's yeast) protein is Deoxyuridine 5'-triphosphate nucleotidohydrolase.